Here is a 100-residue protein sequence, read N- to C-terminus: Large ribosomal subunit protein eL36B (100 aa).

The protein belongs to the eukaryotic ribosomal protein eL36 family. Component of the large ribosomal subunit (LSU). Mature yeast ribosomes consist of a small (40S) and a large (60S) subunit. The 40S small subunit contains 1 molecule of ribosomal RNA (18S rRNA) and 33 different proteins (encoded by 57 genes). The large 60S subunit contains 3 rRNA molecules (25S, 5.8S and 5S rRNA) and 46 different proteins (encoded by 81 genes).

Its subcellular location is the cytoplasm. Functionally, component of the ribosome, a large ribonucleoprotein complex responsible for the synthesis of proteins in the cell. The small ribosomal subunit (SSU) binds messenger RNAs (mRNAs) and translates the encoded message by selecting cognate aminoacyl-transfer RNA (tRNA) molecules. The large subunit (LSU) contains the ribosomal catalytic site termed the peptidyl transferase center (PTC), which catalyzes the formation of peptide bonds, thereby polymerizing the amino acids delivered by tRNAs into a polypeptide chain. The nascent polypeptides leave the ribosome through a tunnel in the LSU and interact with protein factors that function in enzymatic processing, targeting, and the membrane insertion of nascent chains at the exit of the ribosomal tunnel. The chain is Large ribosomal subunit protein eL36B from Saccharomyces cerevisiae (strain ATCC 204508 / S288c) (Baker's yeast).